Here is a 267-residue protein sequence, read N- to C-terminus: 4-diphosphocytidyl-2-C-methyl-D-erythritol kinase (267 aa).

The active site involves K8. 90 to 100 (PIGAGLGGGSS) contacts ATP. Residue D132 is part of the active site.

This sequence belongs to the GHMP kinase family. IspE subfamily.

It catalyses the reaction 4-CDP-2-C-methyl-D-erythritol + ATP = 4-CDP-2-C-methyl-D-erythritol 2-phosphate + ADP + H(+). Its pathway is isoprenoid biosynthesis; isopentenyl diphosphate biosynthesis via DXP pathway; isopentenyl diphosphate from 1-deoxy-D-xylulose 5-phosphate: step 3/6. In terms of biological role, catalyzes the phosphorylation of the position 2 hydroxy group of 4-diphosphocytidyl-2C-methyl-D-erythritol. The polypeptide is 4-diphosphocytidyl-2-C-methyl-D-erythritol kinase (Azobacteroides pseudotrichonymphae genomovar. CFP2).